Here is a 464-residue protein sequence, read N- to C-terminus: Probable 3-ketoacyl-CoA synthase 21 (464 aa).

A helical transmembrane segment spans residues 21–41; it reads LLSSGVSVFEIFAGLLVVHLI. An FAE domain is found at 42–333; it reads YQRIRTRVKV…VIQHILCKKL (292 aa). Active-site residues include C187, H352, H356, H385, and N389.

The protein belongs to the thiolase-like superfamily. Chalcone/stilbene synthases family. Expressed in flowers.

The protein localises to the membrane. It carries out the reaction a very-long-chain acyl-CoA + malonyl-CoA + H(+) = a very-long-chain 3-oxoacyl-CoA + CO2 + CoA. It functions in the pathway lipid metabolism; fatty acid biosynthesis. This chain is Probable 3-ketoacyl-CoA synthase 21, found in Arabidopsis thaliana (Mouse-ear cress).